A 353-amino-acid polypeptide reads, in one-letter code: Probable dual-specificity RNA methyltransferase RlmN (353 aa).

The active-site Proton acceptor is Glu104. Residues 112–341 enclose the Radical SAM core domain; sequence DGGRKTICIS…ILNRRSPGKD (230 aa). Residues Cys119 and Cys346 are joined by a disulfide bond. Residues Cys126, Cys130, and Cys133 each coordinate [4Fe-4S] cluster. S-adenosyl-L-methionine is bound by residues 173–174, Ser205, 228–230, and Asn304; these read GE and SLN. Residue Cys346 is the S-methylcysteine intermediate of the active site.

Belongs to the radical SAM superfamily. RlmN family. Requires [4Fe-4S] cluster as cofactor.

It is found in the cytoplasm. The catalysed reaction is adenosine(2503) in 23S rRNA + 2 reduced [2Fe-2S]-[ferredoxin] + 2 S-adenosyl-L-methionine = 2-methyladenosine(2503) in 23S rRNA + 5'-deoxyadenosine + L-methionine + 2 oxidized [2Fe-2S]-[ferredoxin] + S-adenosyl-L-homocysteine. The enzyme catalyses adenosine(37) in tRNA + 2 reduced [2Fe-2S]-[ferredoxin] + 2 S-adenosyl-L-methionine = 2-methyladenosine(37) in tRNA + 5'-deoxyadenosine + L-methionine + 2 oxidized [2Fe-2S]-[ferredoxin] + S-adenosyl-L-homocysteine. Its function is as follows. Specifically methylates position 2 of adenine 2503 in 23S rRNA and position 2 of adenine 37 in tRNAs. This is Probable dual-specificity RNA methyltransferase RlmN from Leptospira interrogans serogroup Icterohaemorrhagiae serovar copenhageni (strain Fiocruz L1-130).